The chain runs to 178 residues: Putative magnesium-dependent phosphatase YER134C (178 aa).

Asp-11 functions as the Nucleophile in the catalytic mechanism. Residue Asp-11 participates in Mg(2+) binding. Residues Leu-12, Asp-13, Ser-74, and Arg-75 each contribute to the phosphate site. Asp-13 contributes to the Mg(2+) binding site. The active-site Proton donor is the Asp-13. A substrate-binding site is contributed by Arg-75. A Mg(2+)-binding site is contributed by Asp-141.

It belongs to the HAD-like hydrolase superfamily.

It is found in the cytoplasm. The protein resides in the nucleus. It catalyses the reaction O-phospho-L-tyrosyl-[protein] + H2O = L-tyrosyl-[protein] + phosphate. Its function is as follows. Magnesium-dependent phosphatase which may act as a tyrosine phosphatase. The chain is Putative magnesium-dependent phosphatase YER134C from Saccharomyces cerevisiae (strain ATCC 204508 / S288c) (Baker's yeast).